Reading from the N-terminus, the 207-residue chain is Ras-related protein Rab-8A (207 aa).

GTP-binding residues include Ser-17, Gly-18, Val-19, Gly-20, Lys-21, Thr-22, Cys-23, Ser-35, Ser-39, and Thr-40. Residue Thr-22 participates in Mg(2+) binding. 2 consecutive short sequence motifs (switch) follow at residues Asp-31 to Phe-45 and Asp-63 to Gly-80. 2 residues coordinate Mg(2+): Thr-40 and Asp-63. GTP is bound at residue Gly-66. Residue Thr-72 is modified to Phosphothreonine. 5 residues coordinate GTP: Asn-121, Lys-122, Asp-124, Ala-152, and Lys-153. 2 positions are modified to phosphoserine: Ser-181 and Ser-185. Cys-204 bears the Cysteine methyl ester mark. A lipid anchor (S-geranylgeranyl cysteine) is attached at Cys-204. Positions Val-205 to Leu-207 are cleaved as a propeptide — removed in mature form.

This sequence belongs to the small GTPase superfamily. Rab family. As to quaternary structure, interacts (GTP-bound form) with MICALL1; regulates RAB8A association with recycling endosomes. Interacts with MICALL2; competes with RAB13 and is involved in E-cadherin endocytic recycling. Interacts (GTP-bound form) with MICAL1, MICALCL, MICAL3, EHBP1 and EHBP1L1; at least in case of MICAL1, MICALCL, MICAL3 and EHBP1L1 two molecules of RAB8A can bind to one molecule of the effector protein; ternary complexes of RAB8A, RAB13 and either MICAL1 or EHBP1L1 are possible. Interacts with EHD1. Interacts with MAP4K2 and SYTL4. Interacts with SGSM1 and SGSM3. Interacts with RABIF, RIMS2, RPH3A and RPH3A. Interacts with OPTN. Interacts with RAB3IP, RAB3IP functions as guanine exchange factor (GEF). Interacts with MYO5B. Interacts with CIMAP3. Interacts with BIRC6/bruce. Interacts with OCRL. Interacts with AHI1. Interacts with DCDC1. Interacts with LRRK2; interaction facilitates phosphorylation of Thr-72. Interacts with RAB31P, GDI1, GDI2, CHM, CHML, RABGGTA, RABGGTB, TBC1D15 and INPP5B; these interactions are dependent on Thr-72 not being phosphorylated. Interacts with RILPL1 and RILPL2; these interactions are dependent on the phosphorylation of Thr-72 by LRRK2. Interacts with DZIP1; prevents inhibition by the GDP-dissociation inhibitor GDI2. Interacts (in GDP-bound form) with RAB3IP/Rabin8, RAB3IP functions as guanine exchange factor (GEF) towards RAB8A. Interacts (in GDP-bound form) with RPGR, RPGR functions as GEF towards RAB8A. Mg(2+) is required as a cofactor. Phosphorylation of Thr-72 in the switch II region by LRRK2 prevents the association of RAB regulatory proteins, including CHM, CHML and RAB GDP dissociation inhibitors GDI1 and GDI2. Phosphorylation by LRRK2 is required for localization to stressed lysosomes.

It is found in the cell membrane. Its subcellular location is the golgi apparatus. The protein resides in the endosome membrane. The protein localises to the recycling endosome membrane. It localises to the cell projection. It is found in the cilium. Its subcellular location is the cytoplasmic vesicle. The protein resides in the phagosome membrane. The protein localises to the cytoplasm. It localises to the cytoskeleton. It is found in the microtubule organizing center. Its subcellular location is the centrosome. The protein resides in the centriole. The protein localises to the cilium basal body. It localises to the midbody. It is found in the lysosome. It catalyses the reaction GTP + H2O = GDP + phosphate + H(+). With respect to regulation, regulated by guanine nucleotide exchange factors (GEFs) such as RAB3IP/Rabin8 and RPGR which promote the exchange of bound GDP for free GTP, GTPase activating proteins (GAPs) which increase the GTP hydrolysis activity, and GDP dissociation inhibitors (GDIs) which inhibit the dissociation of the nucleotide from the GTPase. Activated in response to insulin. In terms of biological role, the small GTPases Rab are key regulators of intracellular membrane trafficking, from the formation of transport vesicles to their fusion with membranes. Rabs cycle between an inactive GDP-bound form and an active GTP-bound form that is able to recruit to membranes different sets of downstream effectors directly responsible for vesicle formation, movement, tethering and fusion. RAB8A is involved in polarized vesicular trafficking and neurotransmitter release. Together with RAB11A, RAB3IP, the exocyst complex, PARD3, PRKCI, ANXA2, CDC42 and DNMBP promotes transcytosis of PODXL to the apical membrane initiation sites (AMIS), apical surface formation and lumenogenesis. Regulates the compacted morphology of the Golgi. Together with MYO5B and RAB11A participates in epithelial cell polarization. Also involved in membrane trafficking to the cilium and ciliogenesis. Together with MICALL2, may also regulate adherens junction assembly. May play a role in insulin-induced transport to the plasma membrane of the glucose transporter GLUT4 and therefore play a role in glucose homeostasis. Involved in autophagy. Participates in the export of a subset of neosynthesized proteins through a Rab8-Rab10-Rab11-dependent endososomal export route. Targeted to and stabilized on stressed lysosomes through LRRK2 phosphorylation. Suppresses stress-induced lysosomal enlargement through EHBP1 and EHNP1L1 effector proteins. The sequence is that of Ras-related protein Rab-8A (RAB8A) from Bos taurus (Bovine).